A 427-amino-acid chain; its full sequence is MSTLLRGGKVLVNDELVSKDIRIEDGKIVEMGEKLNVYNSEIIELDGKFVSQGFVDVHVHLREPGGEHKETIESGTRAAARGGFTTVCPMPNTRPVPDSVEHIEALNQSIKQHAKVRVLPYASITERQLGKDLVDFKALKEHGAFAFTDDGVGVQTASIMYEAMQQAAQLNMAIVAHCEDNSLIYGGAMHEGKVSKALNIPGIPSICEAVQIARDVLLAEAADCHYHVCHVSSKESVRVIRDAKRAGIKVTAEVTPHHLLLNETAITEDDAILKMNPPLRSEEDHQALIEALLDGTIDFIATDHAPHAADEKNQPMTKAPFGIVGSETAFPLLYTRFVKNGDWTLGQLIDYLALKPGQVFGLPYGKSLEVGSIADITVIDLDEKYEIKSEDFLSKSSNTPFIGEHVYGNVKLTLVEGQIAYQEGQHA.

2 residues coordinate Zn(2+): His-58 and His-60. Substrate-binding positions include His-60 to Arg-62 and Asn-92. Residues Asp-150, His-177, and His-230 each contribute to the Zn(2+) site. Residue Asn-276 participates in substrate binding. Asp-303 contacts Zn(2+). The active site involves Asp-303. Residues His-307 and Phe-321 to Gly-322 contribute to the substrate site.

It belongs to the metallo-dependent hydrolases superfamily. DHOase family. Class I DHOase subfamily. It depends on Zn(2+) as a cofactor.

It carries out the reaction (S)-dihydroorotate + H2O = N-carbamoyl-L-aspartate + H(+). Its pathway is pyrimidine metabolism; UMP biosynthesis via de novo pathway; (S)-dihydroorotate from bicarbonate: step 3/3. In terms of biological role, catalyzes the reversible cyclization of carbamoyl aspartate to dihydroorotate. This Macrococcus caseolyticus (strain JCSC5402) (Macrococcoides caseolyticum) protein is Dihydroorotase.